The primary structure comprises 298 residues: Ribose-phosphate pyrophosphokinase (298 aa).

Residues 33-35 (DGE) and 91-92 (RQ) each bind ATP. His-125 and Asp-164 together coordinate Mg(2+). The active site involves Lys-187. Residues Arg-189 and Asp-224 each contribute to the D-ribose 5-phosphate site.

The protein belongs to the ribose-phosphate pyrophosphokinase family. Class III (archaeal) subfamily. Mg(2+) is required as a cofactor.

The protein resides in the cytoplasm. It catalyses the reaction D-ribose 5-phosphate + ATP = 5-phospho-alpha-D-ribose 1-diphosphate + AMP + H(+). It functions in the pathway metabolic intermediate biosynthesis; 5-phospho-alpha-D-ribose 1-diphosphate biosynthesis; 5-phospho-alpha-D-ribose 1-diphosphate from D-ribose 5-phosphate (route I): step 1/1. In terms of biological role, involved in the biosynthesis of the central metabolite phospho-alpha-D-ribosyl-1-pyrophosphate (PRPP) via the transfer of pyrophosphoryl group from ATP to 1-hydroxyl of ribose-5-phosphate (Rib-5-P). This Methanobrevibacter smithii (strain ATCC 35061 / DSM 861 / OCM 144 / PS) protein is Ribose-phosphate pyrophosphokinase.